A 162-amino-acid chain; its full sequence is Transcription elongation factor GreA (162 aa).

A coiled-coil region spans residues 45–75 (ENAEYEAAREKQAFIEGRIKELEDMAARAEI).

It belongs to the GreA/GreB family.

Necessary for efficient RNA polymerase transcription elongation past template-encoded arresting sites. The arresting sites in DNA have the property of trapping a certain fraction of elongating RNA polymerases that pass through, resulting in locked ternary complexes. Cleavage of the nascent transcript by cleavage factors such as GreA or GreB allows the resumption of elongation from the new 3'terminus. GreA releases sequences of 2 to 3 nucleotides. In Rickettsia canadensis (strain McKiel), this protein is Transcription elongation factor GreA.